The primary structure comprises 64 residues: Large ribosomal subunit protein uL30 (64 aa).

This sequence belongs to the universal ribosomal protein uL30 family. As to quaternary structure, part of the 50S ribosomal subunit.

The chain is Large ribosomal subunit protein uL30 from Methylorubrum populi (strain ATCC BAA-705 / NCIMB 13946 / BJ001) (Methylobacterium populi).